The primary structure comprises 685 residues: Polyphosphate kinase (685 aa).

N45 is a binding site for ATP. Residues R375 and R405 each contribute to the Mg(2+) site. Catalysis depends on H435, which acts as the Phosphohistidine intermediate. 3 residues coordinate ATP: Y468, R564, and H592.

The protein belongs to the polyphosphate kinase 1 (PPK1) family. It depends on Mg(2+) as a cofactor. Post-translationally, an intermediate of this reaction is the autophosphorylated ppk in which a phosphate is covalently linked to a histidine residue through a N-P bond.

The catalysed reaction is [phosphate](n) + ATP = [phosphate](n+1) + ADP. Catalyzes the reversible transfer of the terminal phosphate of ATP to form a long-chain polyphosphate (polyP). This Neisseria gonorrhoeae (strain ATCC 700825 / FA 1090) protein is Polyphosphate kinase.